Reading from the N-terminus, the 446-residue chain is Tol-Pal system protein TolB (446 aa).

The first 19 residues, 1-19 (MLLRYLFILFIIIPIKAFA), serve as a signal peptide directing secretion.

It belongs to the TolB family. As to quaternary structure, the Tol-Pal system is composed of five core proteins: the inner membrane proteins TolA, TolQ and TolR, the periplasmic protein TolB and the outer membrane protein Pal. They form a network linking the inner and outer membranes and the peptidoglycan layer.

Its subcellular location is the periplasm. Functionally, part of the Tol-Pal system, which plays a role in outer membrane invagination during cell division and is important for maintaining outer membrane integrity. The sequence is that of Tol-Pal system protein TolB from Pelagibacter ubique (strain HTCC1062).